Reading from the N-terminus, the 256-residue chain is Imidazole glycerol phosphate synthase subunit hisF1 (256 aa).

Residues Asp-12 and Asp-131 contribute to the active site.

It belongs to the HisA/HisF family. In terms of assembly, heterodimer of HisH and HisF.

Its subcellular location is the cytoplasm. The enzyme catalyses 5-[(5-phospho-1-deoxy-D-ribulos-1-ylimino)methylamino]-1-(5-phospho-beta-D-ribosyl)imidazole-4-carboxamide + L-glutamine = D-erythro-1-(imidazol-4-yl)glycerol 3-phosphate + 5-amino-1-(5-phospho-beta-D-ribosyl)imidazole-4-carboxamide + L-glutamate + H(+). It participates in amino-acid biosynthesis; L-histidine biosynthesis; L-histidine from 5-phospho-alpha-D-ribose 1-diphosphate: step 5/9. Its function is as follows. IGPS catalyzes the conversion of PRFAR and glutamine to IGP, AICAR and glutamate. The HisF subunit catalyzes the cyclization activity that produces IGP and AICAR from PRFAR using the ammonia provided by the HisH subunit. The polypeptide is Imidazole glycerol phosphate synthase subunit hisF1 (hisF1) (Pseudomonas aeruginosa (strain ATCC 15692 / DSM 22644 / CIP 104116 / JCM 14847 / LMG 12228 / 1C / PRS 101 / PAO1)).